Consider the following 687-residue polypeptide: MKPPLNMSRSNKPLTQEANSSAHIDRAHQLAQDFNSKQDDTALTSLPHKNPDIFRFENNITAHSSRRGSLYRDSDATVVLPLSEHTPRLSMDDPYRQLLQQAEISQLRSKKKRHSSRVLRTSFISFVVLVSSLSGLDQGLISGNVMTLSFQKYFHYPLTSPLGNIVSIVNLGAFMASLFVYSGILEPCSRKKMLQISTMIYSLGAIVQVLALNQWCLLLGRFLLGVGMGFAFSMVIIYQFEFPLPCIRKRTLISIQCVSSVIAYSFGIWINCAFRYLGFAWRYPLSTHVALGIILNLMSFYLILESPSWLLKQKNDVEALVLISNVFDDGNFEENQTQLKFRVLKRDILLKSHLQKNSYPYAYILKDFSSIIKLLIGFQLLTRTNGVDAFLYYSPLILQQMGRGERKSIYLTGLNALIYSIVILAYVPLVLRKRKEKTNVLLGSIVMCALLFTISFTDWFPKSTTRYISILFAVFLFTHFISWDSIGWVMTIELLPHLSQAPVILLVSNFYWIFKWFVSLITPILIDRLSWKFYLIPSLSSFISIIFVLKIFPIETRDERLDSDDDSTGNGSGNHDDVFDDTGSEFSSSPSFSAYQINTLGSSIKQNNQAYSSIQNEQILPKNGNLSNQTHGSAQNVYFITSDSGPSRTGEFFSFHNRTDPNISDNIAANKPSSGGGQNSPGDMAVA.

Positions 1–22 (MKPPLNMSRSNKPLTQEANSSA) are disordered. At 1–122 (MKPPLNMSRS…RHSSRVLRTS (122 aa)) the chain is on the extracellular side. The segment covering 7–22 (MSRSNKPLTQEANSSA) has biased composition (polar residues). Serine 90 carries the phosphoserine modification. Residues 123–143 (FISFVVLVSSLSGLDQGLISG) traverse the membrane as a helical segment. Residues 144-164 (NVMTLSFQKYFHYPLTSPLGN) are Cytoplasmic-facing. A helical membrane pass occupies residues 165-185 (IVSIVNLGAFMASLFVYSGIL). Topologically, residues 186 to 192 (EPCSRKK) are extracellular. The chain crosses the membrane as a helical span at residues 193 to 213 (MLQISTMIYSLGAIVQVLALN). Residues 214 to 216 (QWC) lie on the Cytoplasmic side of the membrane. A helical membrane pass occupies residues 217-237 (LLLGRFLLGVGMGFAFSMVII). At 238-251 (YQFEFPLPCIRKRT) the chain is on the extracellular side. Residues 252 to 272 (LISIQCVSSVIAYSFGIWINC) form a helical membrane-spanning segment. The Cytoplasmic portion of the chain corresponds to 273 to 283 (AFRYLGFAWRY). Residues 284–304 (PLSTHVALGIILNLMSFYLIL) form a helical membrane-spanning segment. Residues 305 to 410 (ESPSWLLKQK…MGRGERKSIY (106 aa)) lie on the Extracellular side of the membrane. Residues 411 to 431 (LTGLNALIYSIVILAYVPLVL) traverse the membrane as a helical segment. Residues 432–439 (RKRKEKTN) are Cytoplasmic-facing. The chain crosses the membrane as a helical span at residues 440 to 460 (VLLGSIVMCALLFTISFTDWF). Residues 461–469 (PKSTTRYIS) lie on the Extracellular side of the membrane. A helical membrane pass occupies residues 470 to 490 (ILFAVFLFTHFISWDSIGWVM). The Cytoplasmic segment spans residues 491-500 (TIELLPHLSQ). The chain crosses the membrane as a helical span at residues 501–521 (APVILLVSNFYWIFKWFVSLI). The Extracellular portion of the chain corresponds to 522 to 533 (TPILIDRLSWKF). A helical transmembrane segment spans residues 534–554 (YLIPSLSSFISIIFVLKIFPI). Residues 555 to 687 (ETRDERLDSD…QNSPGDMAVA (133 aa)) lie on the Cytoplasmic side of the membrane. Disordered regions lie at residues 561–587 (LDSD…SEFS) and 654–687 (SFHN…MAVA). Polar residues predominate over residues 660-673 (DPNISDNIAANKPS).

It belongs to the major facilitator superfamily. Sugar transporter (TC 2.A.1.1) family.

It localises to the membrane. The chain is Putative metabolite transport protein YDL199C from Saccharomyces cerevisiae (strain ATCC 204508 / S288c) (Baker's yeast).